Consider the following 401-residue polypeptide: S-adenosylmethionine synthase (401 aa).

H16 contacts ATP. D18 is a binding site for Mg(2+). E44 provides a ligand contact to K(+). Residues E57 and Q100 each coordinate L-methionine. The flexible loop stretch occupies residues 100–110; sequence QSPDIAQGVNE. ATP-binding positions include 174–176, 241–242, D250, 256–257, A273, and K277; these read DAK, RF, and RK. D250 serves as a coordination point for L-methionine. L-methionine is bound at residue K281.

Belongs to the AdoMet synthase family. In terms of assembly, homotetramer; dimer of dimers. The cofactor is Mg(2+). It depends on K(+) as a cofactor.

The protein localises to the cytoplasm. The catalysed reaction is L-methionine + ATP + H2O = S-adenosyl-L-methionine + phosphate + diphosphate. Its pathway is amino-acid biosynthesis; S-adenosyl-L-methionine biosynthesis; S-adenosyl-L-methionine from L-methionine: step 1/1. Functionally, catalyzes the formation of S-adenosylmethionine (AdoMet) from methionine and ATP. The overall synthetic reaction is composed of two sequential steps, AdoMet formation and the subsequent tripolyphosphate hydrolysis which occurs prior to release of AdoMet from the enzyme. This chain is S-adenosylmethionine synthase, found in Streptococcus equi subsp. zooepidemicus (strain H70).